The sequence spans 562 residues: NAD-dependent malic enzyme (562 aa).

Tyr101 (proton donor) is an active-site residue. Arg154 is a binding site for NAD(+). The active-site Proton acceptor is the Lys172. Residues Glu243, Asp244, and Asp267 each coordinate a divalent metal cation. NAD(+) contacts are provided by Asp267 and Asn415.

This sequence belongs to the malic enzymes family. In terms of assembly, homotetramer. The cofactor is Mg(2+). It depends on Mn(2+) as a cofactor.

The catalysed reaction is (S)-malate + NAD(+) = pyruvate + CO2 + NADH. It carries out the reaction oxaloacetate + H(+) = pyruvate + CO2. The sequence is that of NAD-dependent malic enzyme from Shewanella halifaxensis (strain HAW-EB4).